The chain runs to 284 residues: MGEIIDGKKLAKEIQEKVTREVAELVKEGKKPGLAVVLVGDNQASRTYVRNKQKRTEEAGMKSVLIELPENVTEEKLLSVVEELNEDKTIHGILVQLPLPEHISEEKVIDTISYDKDVDGFHPVNVGNLFIGKDSFVPCTPAGIIELIKSTGTQIEGKRAVVIGRSNIVGKPVAQLLLIENATVTIAHSRTKDLPQVAKEADILVVATGLAKFVKKDYIKPGAVVIDVGMDRDENNKLCGDVDFDDVVEEAGFITPVPGGVGPMTITMLLANTLKAAKRIWKMN.

NADP(+) contacts are provided by residues 164–166 and S189; that span reads GRS.

This sequence belongs to the tetrahydrofolate dehydrogenase/cyclohydrolase family. In terms of assembly, homodimer.

The enzyme catalyses (6R)-5,10-methylene-5,6,7,8-tetrahydrofolate + NADP(+) = (6R)-5,10-methenyltetrahydrofolate + NADPH. It carries out the reaction (6R)-5,10-methenyltetrahydrofolate + H2O = (6R)-10-formyltetrahydrofolate + H(+). Its pathway is one-carbon metabolism; tetrahydrofolate interconversion. Functionally, catalyzes the oxidation of 5,10-methylenetetrahydrofolate to 5,10-methenyltetrahydrofolate and then the hydrolysis of 5,10-methenyltetrahydrofolate to 10-formyltetrahydrofolate. In Listeria monocytogenes serotype 4b (strain F2365), this protein is Bifunctional protein FolD.